A 295-amino-acid chain; its full sequence is Ribosomal protein L11 methyltransferase (295 aa).

The S-adenosyl-L-methionine site is built by Thr-146, Gly-167, Asp-189, and Asn-231.

The protein belongs to the methyltransferase superfamily. PrmA family.

It is found in the cytoplasm. The enzyme catalyses L-lysyl-[protein] + 3 S-adenosyl-L-methionine = N(6),N(6),N(6)-trimethyl-L-lysyl-[protein] + 3 S-adenosyl-L-homocysteine + 3 H(+). Its function is as follows. Methylates ribosomal protein L11. The sequence is that of Ribosomal protein L11 methyltransferase from Vibrio cholerae serotype O1 (strain M66-2).